A 179-amino-acid chain; its full sequence is Avenin-like a2 (179 aa).

Positions 1–19 (MKTMFLLALLAFTATSAVA) are cleaved as a signal peptide.

The protein belongs to the prolamin family. In terms of processing, contains 7 disulfide bonds.

In terms of biological role, seed storage protein. Not integrated in the gluten polymer through disulfide bonds, unless incorporated by reduction and reoxidation during dough making. Increases dough strength and bread volume, but decreases dough stability when added into a base wheat flour. This Triticum aestivum (Wheat) protein is Avenin-like a2.